Here is a 391-residue protein sequence, read N- to C-terminus: Putative penicillin-binding protein PbpX (391 aa).

The helical transmembrane segment at 21–40 (GKLLFGLLAVMVCITIWNAL) threads the bilayer. Positions 44-76 (SEENEPSQETAAVSNTDQKKEVKKKTAKKSEEQ) are disordered. Polar residues predominate over residues 50–59 (SQETAAVSNT).

It belongs to the beta-lactamase family.

It is found in the cell membrane. The sequence is that of Putative penicillin-binding protein PbpX (pbpX) from Bacillus subtilis (strain 168).